Consider the following 116-residue polypeptide: Iron-sulfur cluster insertion protein ErpA (116 aa).

Iron-sulfur cluster contacts are provided by cysteine 44, cysteine 108, and cysteine 110.

This sequence belongs to the HesB/IscA family. Homodimer. Requires iron-sulfur cluster as cofactor.

Functionally, required for insertion of 4Fe-4S clusters for at least IspG. The sequence is that of Iron-sulfur cluster insertion protein ErpA from Shewanella amazonensis (strain ATCC BAA-1098 / SB2B).